The chain runs to 219 residues: Interleukin-12 subunit alpha (219 aa).

An N-terminal signal peptide occupies residues 1-22; it reads MCPARSLLLVATLVLLDYLSLA. N-linked (GlcNAc...) asparagine glycosylation is found at asparagine 24, asparagine 93, and asparagine 107. Disulfide bonds link cysteine 37-cysteine 110, cysteine 64-cysteine 196, and cysteine 85-cysteine 123.

This sequence belongs to the IL-6 superfamily. As to quaternary structure, heterodimer with IL12B; disulfide-linked. This heterodimer is known as interleukin IL-12. Heterodimer with EBI3/IL27B; not disulfide-linked. This heterodimer is known as interleukin IL-35. Interacts with NBR1; this interaction promotes IL-12 secretion.

Its subcellular location is the secreted. Heterodimerizes with IL12B to form the IL-12 cytokine or with EBI3/IL27B to form the IL-35 cytokine. IL-12 is primarily produced by professional antigen-presenting cells (APCs) such as B-cells and dendritic cells (DCs) as well as macrophages and granulocytes and regulates T-cell and natural killer-cell responses, induces the production of interferon-gamma (IFN-gamma), favors the differentiation of T-helper 1 (Th1) cells and is an important link between innate resistance and adaptive immunity. Mechanistically, exerts its biological effects through a receptor composed of IL12R1 and IL12R2 subunits. Binding to the receptor results in the rapid tyrosine phosphorylation of a number of cellular substrates including the JAK family kinases TYK2 and JAK2. In turn, recruited STAT4 gets phosphorylated and translocates to the nucleus where it regulates cytokine/growth factor responsive genes. As part of IL-35, plays essential roles in maintaining the immune homeostasis of the liver microenvironment and also functions as an immune-suppressive cytokine. Mediates biological events through unconventional receptors composed of IL12RB2 and gp130/IL6ST heterodimers or homodimers. Signaling requires the transcription factors STAT1 and STAT4, which form a unique heterodimer that binds to distinct DNA sites. This chain is Interleukin-12 subunit alpha (IL12A), found in Macaca mulatta (Rhesus macaque).